A 481-amino-acid chain; its full sequence is Extracellular exo-alpha-(1-&gt;5)-L-arabinofuranosidase (481 aa).

The signal sequence occupies residues 1–27 (MRRLTVRLFTAVLAALALLTMGTPAHA). The tract at residues 37 to 336 (FTNPLAEKRA…KVYWNADGTP (300 aa)) is catalytic. Asp-47 (proton acceptor) is an active-site residue. A substrate-binding site is contributed by Asn-186. Catalysis depends on Glu-223, which acts as the Proton donor. Substrate is bound by residues His-287, Arg-321, 363–366 (HWDF), Asp-379, 457–460 (HYEN), and Asp-475. An ABD region spans residues 349–479 (VRFSSYNYPD…ALDRQDATFY (131 aa)).

The protein belongs to the glycosyl hydrolase 43 family.

Its subcellular location is the secreted. The catalysed reaction is Hydrolysis of terminal non-reducing alpha-L-arabinofuranoside residues in alpha-L-arabinosides.. The protein operates within glycan metabolism; L-arabinan degradation. In terms of biological role, involved in the degradation of arabinan and is a key enzyme in the complete degradation of the plant cell wall. Catalyzes only the cleavage of terminal alpha-(1-&gt;5) arabinofuranosyl bonds of arabinan present in the arabinofuranosyl polysaccharides or oligosaccharides. It cannot act on other arabinose-containing polysaccharides and arabinoxylo-oligosaccharides. The chain is Extracellular exo-alpha-(1-&gt;5)-L-arabinofuranosidase from Streptomyces avermitilis (strain ATCC 31267 / DSM 46492 / JCM 5070 / NBRC 14893 / NCIMB 12804 / NRRL 8165 / MA-4680).